We begin with the raw amino-acid sequence, 598 residues long: UvrABC system protein C (598 aa).

A GIY-YIG domain is found at 14 to 91; the sequence is DSPGCYLHKD…IQKNMPKYNI (78 aa). The 36-residue stretch at 196–231 folds into the UVR domain; that stretch reads DKIIEDLRSKMLAASEEMAFERAAEYRDLISGIATM.

This sequence belongs to the UvrC family. Interacts with UvrB in an incision complex.

The protein resides in the cytoplasm. Its function is as follows. The UvrABC repair system catalyzes the recognition and processing of DNA lesions. UvrC both incises the 5' and 3' sides of the lesion. The N-terminal half is responsible for the 3' incision and the C-terminal half is responsible for the 5' incision. In Streptococcus pyogenes serotype M28 (strain MGAS6180), this protein is UvrABC system protein C.